The following is a 637-amino-acid chain: Coiled-coil domain-containing protein 22 homolog (637 aa).

2 coiled-coil regions span residues 322-489 and 608-637; these read ETEI…YKQA and SDRVVQDLKNIKSENQSLIKQIKTLIETKN.

It belongs to the CCDC22 family.

The protein is Coiled-coil domain-containing protein 22 homolog of Dictyostelium discoideum (Social amoeba).